The primary structure comprises 332 residues: NADH-quinone oxidoreductase subunit H (332 aa).

The next 9 membrane-spanning stretches (helical) occupy residues 16 to 36 (VFFG…TYAI), 87 to 107 (YVLA…ALPF), 116 to 136 (IGVG…GVVT), 164 to 184 (LVMS…VDIV), 190 to 210 (VWFI…AVAE), 231 to 251 (VEYS…YLFA), 253 to 273 (AALI…LGWI), 277 to 297 (VWFA…RATF), and 312 to 332 (VLLP…SLFF).

Belongs to the complex I subunit 1 family. NDH-1 is composed of 14 different subunits. Subunits NuoA, H, J, K, L, M, N constitute the membrane sector of the complex.

The protein resides in the cell membrane. It carries out the reaction a quinone + NADH + 5 H(+)(in) = a quinol + NAD(+) + 4 H(+)(out). Functionally, NDH-1 shuttles electrons from NADH, via FMN and iron-sulfur (Fe-S) centers, to quinones in the respiratory chain. The immediate electron acceptor for the enzyme in this species is believed to be ubiquinone. Couples the redox reaction to proton translocation (for every two electrons transferred, four hydrogen ions are translocated across the cytoplasmic membrane), and thus conserves the redox energy in a proton gradient. This subunit may bind ubiquinone. This Geobacillus thermodenitrificans (strain NG80-2) protein is NADH-quinone oxidoreductase subunit H.